Consider the following 870-residue polypeptide: Protein translocase subunit SecA (870 aa).

Residues Gln86, 104-108, and Asp499 contribute to the ATP site; that span reads GEGKT. Residues Cys854, Cys856, Cys865, and His866 each contribute to the Zn(2+) site.

This sequence belongs to the SecA family. Monomer and homodimer. Part of the essential Sec protein translocation apparatus which comprises SecA, SecYEG and auxiliary proteins SecDF-YajC and YidC. Zn(2+) serves as cofactor.

It is found in the cell inner membrane. The protein localises to the cytoplasm. The catalysed reaction is ATP + H2O + cellular proteinSide 1 = ADP + phosphate + cellular proteinSide 2.. Its function is as follows. Part of the Sec protein translocase complex. Interacts with the SecYEG preprotein conducting channel. Has a central role in coupling the hydrolysis of ATP to the transfer of proteins into and across the cell membrane, serving both as a receptor for the preprotein-SecB complex and as an ATP-driven molecular motor driving the stepwise translocation of polypeptide chains across the membrane. The chain is Protein translocase subunit SecA from Ehrlichia ruminantium (strain Welgevonden).